The following is a 506-amino-acid chain: Phase 2 flagellin (506 aa).

Belongs to the bacterial flagellin family.

Its subcellular location is the secreted. The protein resides in the bacterial flagellum. In terms of biological role, flagellin is the subunit protein which polymerizes to form the filaments of bacterial flagella. The chain is Phase 2 flagellin (fljB) from Salmonella typhimurium (strain LT2 / SGSC1412 / ATCC 700720).